The sequence spans 842 residues: DNA mismatch repair protein MutS (842 aa).

G596 to S603 lines the ATP pocket.

The protein belongs to the DNA mismatch repair MutS family.

This protein is involved in the repair of mismatches in DNA. It is possible that it carries out the mismatch recognition step. This protein has a weak ATPase activity. The chain is DNA mismatch repair protein MutS from Exiguobacterium sp. (strain ATCC BAA-1283 / AT1b).